A 212-amino-acid chain; its full sequence is Nitrogen regulatory protein P-II homolog (212 aa).

Low complexity-rich tracts occupy residues 1 to 12 (MSSPATAAAAAA), 32 to 46 (TTTT…SRSR), and 63 to 74 (PPTAARAQSAAA). The transit peptide at 1–68 (MSSPATAAAA…PRRLPPTAAR (68 aa)) directs the protein to the chloroplast. Positions 1-74 (MSSPATAAAA…TAARAQSAAA (74 aa)) are disordered. ATP contacts are provided by residues 117–121 (GFGAQ) and 170–173 (GDGK). Gly-119 contributes to the Mg(2+) binding site.

This sequence belongs to the P(II) protein family. As to quaternary structure, homodimer.

The protein localises to the plastid. It localises to the chloroplast. Functionally, participates in sensing carbon and organic nitrogen status and regulates some steps of primary carbon and nitrogen metabolism. The sequence is that of Nitrogen regulatory protein P-II homolog (GLB) from Oryza sativa subsp. japonica (Rice).